A 163-amino-acid polypeptide reads, in one-letter code: Leptin (163 aa).

The N-terminal stretch at 1–18 (MCWRPLCRLWSYLVYVQA) is a signal peptide. A disulfide bridge connects residues Cys-113 and Cys-163.

This sequence belongs to the leptin family. In terms of tissue distribution, not exclusively localized in adipose tissue but is also expressed in liver.

The protein resides in the secreted. Its function is as follows. Key player in the regulation of energy balance and body weight control. Once released into the circulation, has central and peripheral effects by binding LEPR, found in many tissues, which results in the activation of several major signaling pathways. This chain is Leptin (LEP), found in Gallus gallus (Chicken).